Consider the following 282-residue polypeptide: MRGARLTGALLALAGLLQVALSLRIAAFNIRTFGETKMSNDTLSNYIVQILNRYDIALIQEVRDSHLTAVGKLLDRLNQDDPNTYHFVVSEPLGRNNYKERYLFVFRPDQVSLLDSYQYNDGCEPCGNDTFSREPAIVKFSSPFTQVKEFAIVPLHAAPSDALAEIDSLYDVYLDVQQKWDMEDIMLMGDFNAGCSYVTSSQWPSIRLRRNPAFWWLIPDTADTTVKSTHCAYDRIVVAGTLLQEAVVPDSAVPFDFQAAYGLNDQTAEAISDHYPVEVTLM.

An N-terminal signal peptide occupies residues 1 to 22 (MRGARLTGALLALAGLLQVALS). Asn-40 is a glycosylation site (N-linked (GlcNAc...) asparagine). The active site involves Glu-100. Cys-123 and Cys-126 are joined by a disulfide. A glycan (N-linked (GlcNAc...) asparagine) is linked at Asn-128. The active site involves His-156. Cys-195 and Cys-231 are disulfide-bonded.

Belongs to the DNase I family. It depends on Ca(2+) as a cofactor. The cofactor is Mg(2+).

The protein localises to the secreted. Its subcellular location is the zymogen granule. The protein resides in the nucleus envelope. The catalysed reaction is Endonucleolytic cleavage to 5'-phosphodinucleotide and 5'-phosphooligonucleotide end-products.. In terms of biological role, serum endocuclease secreted into body fluids by a wide variety of exocrine and endocrine organs. Expressed by non-hematopoietic tissues and preferentially cleaves protein-free DNA. Among other functions, seems to be involved in cell death by apoptosis. Binds specifically to G-actin and blocks actin polymerization. Together with DNASE1L3, plays a key role in degrading neutrophil extracellular traps (NETs). NETs are mainly composed of DNA fibers and are released by neutrophils to bind pathogens during inflammation. Degradation of intravascular NETs by DNASE1 and DNASE1L3 is required to prevent formation of clots that obstruct blood vessels and cause organ damage following inflammation. This chain is Deoxyribonuclease-1 (DNASE1), found in Equus caballus (Horse).